The primary structure comprises 231 residues: NADH-ubiquinone oxidoreductase chain 4 (231 aa).

Helical transmembrane passes span 1–21, 34–54, 61–80, 84–106, 128–148, and 169–189; these read PIAG…YGII, LFLP…LTCL, SLIA…AIII, WGLS…LFCL, ILPM…ATPP, and TIIL…HMFL.

The protein belongs to the complex I subunit 4 family.

It is found in the mitochondrion membrane. It carries out the reaction a ubiquinone + NADH + 5 H(+)(in) = a ubiquinol + NAD(+) + 4 H(+)(out). In terms of biological role, core subunit of the mitochondrial membrane respiratory chain NADH dehydrogenase (Complex I) that is believed to belong to the minimal assembly required for catalysis. Complex I functions in the transfer of electrons from NADH to the respiratory chain. The immediate electron acceptor for the enzyme is believed to be ubiquinone. In Metlapilcoatlus nummifer (Mexican jumping pitviper), this protein is NADH-ubiquinone oxidoreductase chain 4 (MT-ND4).